Here is a 153-residue protein sequence, read N- to C-terminus: Large ribosomal subunit protein uL13 (153 aa).

The disordered stretch occupies residues 134 to 153 (EAQQPQALDVGSLNRKNVSA).

Belongs to the universal ribosomal protein uL13 family. In terms of assembly, part of the 50S ribosomal subunit.

This protein is one of the early assembly proteins of the 50S ribosomal subunit, although it is not seen to bind rRNA by itself. It is important during the early stages of 50S assembly. The polypeptide is Large ribosomal subunit protein uL13 (Methylorubrum extorquens (strain CM4 / NCIMB 13688) (Methylobacterium extorquens)).